Here is a 100-residue protein sequence, read N- to C-terminus: Aspartyl/glutamyl-tRNA(Asn/Gln) amidotransferase subunit C (100 aa).

It belongs to the GatC family. Heterotrimer of A, B and C subunits.

It catalyses the reaction L-glutamyl-tRNA(Gln) + L-glutamine + ATP + H2O = L-glutaminyl-tRNA(Gln) + L-glutamate + ADP + phosphate + H(+). The catalysed reaction is L-aspartyl-tRNA(Asn) + L-glutamine + ATP + H2O = L-asparaginyl-tRNA(Asn) + L-glutamate + ADP + phosphate + 2 H(+). Functionally, allows the formation of correctly charged Asn-tRNA(Asn) or Gln-tRNA(Gln) through the transamidation of misacylated Asp-tRNA(Asn) or Glu-tRNA(Gln) in organisms which lack either or both of asparaginyl-tRNA or glutaminyl-tRNA synthetases. The reaction takes place in the presence of glutamine and ATP through an activated phospho-Asp-tRNA(Asn) or phospho-Glu-tRNA(Gln). This is Aspartyl/glutamyl-tRNA(Asn/Gln) amidotransferase subunit C from Dictyoglomus thermophilum (strain ATCC 35947 / DSM 3960 / H-6-12).